The sequence spans 172 residues: Adenine phosphoribosyltransferase (172 aa).

Belongs to the purine/pyrimidine phosphoribosyltransferase family. In terms of assembly, homodimer.

The protein localises to the cytoplasm. The enzyme catalyses AMP + diphosphate = 5-phospho-alpha-D-ribose 1-diphosphate + adenine. The protein operates within purine metabolism; AMP biosynthesis via salvage pathway; AMP from adenine: step 1/1. Functionally, catalyzes a salvage reaction resulting in the formation of AMP, that is energically less costly than de novo synthesis. The protein is Adenine phosphoribosyltransferase of Polynucleobacter asymbioticus (strain DSM 18221 / CIP 109841 / QLW-P1DMWA-1) (Polynucleobacter necessarius subsp. asymbioticus).